The sequence spans 371 residues: MEKLEQKTIVELRNVTKSYGDKTILKDLNLTINDGEFLTILGPSGCGKTTALRLIAGFEDLTEGSIILDGQDVSNVSAEKRPVNTVFQSYALFPHMTIFENVAFGLRMQKVPNEQITPRVMEALRMVRLEDRAEQKPAQLSGGQQQRIAIARAVVNKPKVLLLDESLSALDYKLRKEMQNELKALQRQLGITFIFVTHDQEEALTMSDRIIVMNAGKVAQDGTPREIYEEPKNLFVARFIGEINVFDATVIERIDARNVKANVEGRICHIKVEDMQVVPNQKLKVLLRPEDIVIEELDEDQSSKAIIGHIIDRNYKGMTLESSVKLDHNGMNVLVSEFFNEDDPHIDHSVGQKVALTWHEGWEVVLNDEDC.

The ABC transporter domain maps to 10-240 (VELRNVTKSY…PKNLFVARFI (231 aa)). 42 to 49 (GPSGCGKT) is a binding site for ATP.

This sequence belongs to the ABC transporter superfamily. Spermidine/putrescine importer (TC 3.A.1.11.1) family. The complex is composed of two ATP-binding proteins (PotA), two transmembrane proteins (PotB and PotC) and a solute-binding protein (PotD).

The protein resides in the cell inner membrane. The enzyme catalyses ATP + H2O + polyamine-[polyamine-binding protein]Side 1 = ADP + phosphate + polyamineSide 2 + [polyamine-binding protein]Side 1.. Part of the ABC transporter complex PotABCD involved in spermidine/putrescine import. Responsible for energy coupling to the transport system. In Haemophilus ducreyi (strain 35000HP / ATCC 700724), this protein is Spermidine/putrescine import ATP-binding protein PotA.